A 697-amino-acid chain; its full sequence is tRNA 5-methylaminomethyl-2-thiouridine biosynthesis bifunctional protein MnmC (697 aa).

Residues 1–272 (MPKPASMAMN…KREMLTAVMS (272 aa)) form a tRNA (mnm(5)s(2)U34)-methyltransferase region. The FAD-dependent cmnm(5)s(2)U34 oxidoreductase stretch occupies residues 300–697 (IGAGVAGLLT…HKHKTRQAVI (398 aa)).

This sequence in the N-terminal section; belongs to the methyltransferase superfamily. tRNA (mnm(5)s(2)U34)-methyltransferase family. The protein in the C-terminal section; belongs to the DAO family. FAD is required as a cofactor.

It localises to the cytoplasm. The enzyme catalyses 5-aminomethyl-2-thiouridine(34) in tRNA + S-adenosyl-L-methionine = 5-methylaminomethyl-2-thiouridine(34) in tRNA + S-adenosyl-L-homocysteine + H(+). Its function is as follows. Catalyzes the last two steps in the biosynthesis of 5-methylaminomethyl-2-thiouridine (mnm(5)s(2)U) at the wobble position (U34) in tRNA. Catalyzes the FAD-dependent demodification of cmnm(5)s(2)U34 to nm(5)s(2)U34, followed by the transfer of a methyl group from S-adenosyl-L-methionine to nm(5)s(2)U34, to form mnm(5)s(2)U34. This is tRNA 5-methylaminomethyl-2-thiouridine biosynthesis bifunctional protein MnmC from Psychrobacter cryohalolentis (strain ATCC BAA-1226 / DSM 17306 / VKM B-2378 / K5).